We begin with the raw amino-acid sequence, 74 residues long: Peptide Im-4 (74 aa).

The signal sequence occupies residues 1 to 22; sequence MKFQYLLAIFMIVLVVTDHCQA. A Lysine amide; partial modification is found at K39. Positions 40 to 74 are excised as a propeptide; sequence GRRRRQLEARYEPQQRNFRKREIDFEKLFANMPDY.

This sequence belongs to the non-disulfide-bridged peptide (NDBP) superfamily. Short antimicrobial peptide (group 4) family. In terms of tissue distribution, expressed by the venom gland.

The protein localises to the secreted. Its subcellular location is the target cell membrane. Functionally, antimicrobial peptide that probably forms pores in target membranes. Has antibacterial activity against Gram-positive bacteria S.aureus NBRC 13276 (MIC=5-10 uM) and B.subtilis NBRC 3009 (MIC=2.5-5 uM) but not against Gram-negative bacterium E.coli NBRC 3972. The chain is Peptide Im-4 from Isometrus maculatus (Lesser brown scorpion).